The sequence spans 247 residues: 3-deoxy-manno-octulosonate cytidylyltransferase (247 aa).

This sequence belongs to the KdsB family.

The protein resides in the cytoplasm. The catalysed reaction is 3-deoxy-alpha-D-manno-oct-2-ulosonate + CTP = CMP-3-deoxy-beta-D-manno-octulosonate + diphosphate. The protein operates within nucleotide-sugar biosynthesis; CMP-3-deoxy-D-manno-octulosonate biosynthesis; CMP-3-deoxy-D-manno-octulosonate from 3-deoxy-D-manno-octulosonate and CTP: step 1/1. It functions in the pathway bacterial outer membrane biogenesis; lipopolysaccharide biosynthesis. Activates KDO (a required 8-carbon sugar) for incorporation into bacterial lipopolysaccharide in Gram-negative bacteria. This chain is 3-deoxy-manno-octulosonate cytidylyltransferase, found in Chlorobium limicola (strain DSM 245 / NBRC 103803 / 6330).